The primary structure comprises 257 residues: Sad1-interacting factor 1 (257 aa).

A disordered region spans residues 16–68 (LNKIKQGGASRINQILGQNSDDSQSDVRATASEEAVHSETATPVTPMSSGFME). 2 stretches are compositionally biased toward polar residues: residues 26–37 (RINQILGQNSDD) and 54–63 (ETATPVTPMS). S35 is modified (phosphoserine). The residue at position 132 (S132) is a Phosphoserine. A Phosphothreonine modification is found at T134. Transmembrane regions (helical) follow at residues 160–180 (LLAISIVVIVCYFKHLPLLPW) and 231–251 (FTQLITDACMTIFALGLCCYF).

In terms of assembly, interacts with kms1 and sad1.

Its subcellular location is the membrane. This chain is Sad1-interacting factor 1 (sif1), found in Schizosaccharomyces pombe (strain 972 / ATCC 24843) (Fission yeast).